The chain runs to 303 residues: UDP-N-acetylenolpyruvoylglucosamine reductase (303 aa).

In terms of domain architecture, FAD-binding PCMH-type spans 30–195 (KTGGPADLLA…LSARFEMAKG (166 aa)). R174 is a catalytic residue. S224 acts as the Proton donor in catalysis. Residue E294 is part of the active site.

It belongs to the MurB family. It depends on FAD as a cofactor.

Its subcellular location is the cytoplasm. It carries out the reaction UDP-N-acetyl-alpha-D-muramate + NADP(+) = UDP-N-acetyl-3-O-(1-carboxyvinyl)-alpha-D-glucosamine + NADPH + H(+). The protein operates within cell wall biogenesis; peptidoglycan biosynthesis. Cell wall formation. The sequence is that of UDP-N-acetylenolpyruvoylglucosamine reductase from Latilactobacillus sakei subsp. sakei (strain 23K) (Lactobacillus sakei subsp. sakei).